The primary structure comprises 380 residues: Cytochrome b (380 aa).

Helical transmembrane passes span 34–54 (FGSL…LLAM), 78–99 (WLIR…FLHI), 114–134 (WNTG…GYVL), and 179–199 (FFAL…IHLT). 2 residues coordinate heme b: His-84 and His-98. Heme b contacts are provided by His-183 and His-197. His-202 is a binding site for a ubiquinone. 4 consecutive transmembrane segments (helical) span residues 227–247 (FKDI…ALFS), 289–309 (LGGV…PFLH), 321–341 (LSQT…WIGS), and 348–368 (FIII…ILFP).

This sequence belongs to the cytochrome b family. The cytochrome bc1 complex contains 11 subunits: 3 respiratory subunits (MT-CYB, CYC1 and UQCRFS1), 2 core proteins (UQCRC1 and UQCRC2) and 6 low-molecular weight proteins (UQCRH/QCR6, UQCRB/QCR7, UQCRQ/QCR8, UQCR10/QCR9, UQCR11/QCR10 and a cleavage product of UQCRFS1). This cytochrome bc1 complex then forms a dimer. The cofactor is heme b.

The protein resides in the mitochondrion inner membrane. Component of the ubiquinol-cytochrome c reductase complex (complex III or cytochrome b-c1 complex) that is part of the mitochondrial respiratory chain. The b-c1 complex mediates electron transfer from ubiquinol to cytochrome c. Contributes to the generation of a proton gradient across the mitochondrial membrane that is then used for ATP synthesis. In Gallus gallus (Chicken), this protein is Cytochrome b (MT-CYB).